We begin with the raw amino-acid sequence, 586 residues long: Methionine--tRNA ligase, mitochondrial (586 aa).

The N-terminal 46 residues, 1–46, are a transit peptide targeting the mitochondrion; that stretch reads MLRQCARWVLTRTRFGRGCRRYGSCSPSASGDAGEARAYFTTPIFY. Positions 45 to 55 match the 'HIGH' region motif; it reads FYVNAAPHIGH. The short motif at 340–344 is the 'KMSKS' region element; sequence KMSKS. An ATP-binding site is contributed by K343.

The protein belongs to the class-I aminoacyl-tRNA synthetase family.

The protein resides in the mitochondrion matrix. It catalyses the reaction tRNA(Met) + L-methionine + ATP = L-methionyl-tRNA(Met) + AMP + diphosphate. This is Methionine--tRNA ligase, mitochondrial (Mars2) from Mus musculus (Mouse).